Reading from the N-terminus, the 129-residue chain is Phosphoribosyl-AMP cyclohydrolase (129 aa).

Residue aspartate 87 coordinates Mg(2+). Residue cysteine 88 participates in Zn(2+) binding. Residues aspartate 89 and aspartate 91 each contribute to the Mg(2+) site. Cysteine 104 and cysteine 111 together coordinate Zn(2+).

The protein belongs to the PRA-CH family. In terms of assembly, homodimer. The cofactor is Mg(2+). It depends on Zn(2+) as a cofactor.

The protein localises to the cytoplasm. It catalyses the reaction 1-(5-phospho-beta-D-ribosyl)-5'-AMP + H2O = 1-(5-phospho-beta-D-ribosyl)-5-[(5-phospho-beta-D-ribosylamino)methylideneamino]imidazole-4-carboxamide. It functions in the pathway amino-acid biosynthesis; L-histidine biosynthesis; L-histidine from 5-phospho-alpha-D-ribose 1-diphosphate: step 3/9. In terms of biological role, catalyzes the hydrolysis of the adenine ring of phosphoribosyl-AMP. The sequence is that of Phosphoribosyl-AMP cyclohydrolase from Ruegeria sp. (strain TM1040) (Silicibacter sp.).